We begin with the raw amino-acid sequence, 632 residues long: Signal-transduction and transcriptional-control protein (632 aa).

In terms of domain architecture, PAS spans 197 to 270 (TYQYLNKITD…GQSYEDEEIM (74 aa)). The Sigma-54 factor interaction domain occupies 324–554 (IIGQSEAMKR…LENCIENIVN (231 aa)). Residues 352–359 (GESGTGKE) and 416–425 (ANEGTLFLDE) each bind ATP. Positions 606-625 (ISKACRILGINRSTLYIKIK) form a DNA-binding region, H-T-H motif.

This is Signal-transduction and transcriptional-control protein (stc) from Clostridium beijerinckii (Clostridium MP).